Consider the following 247-residue polypeptide: 5'-nucleotidase SurE (247 aa).

4 residues coordinate a divalent metal cation: Asp-8, Asp-9, Ser-39, and Asn-91.

Belongs to the SurE nucleotidase family. Requires a divalent metal cation as cofactor.

Its subcellular location is the cytoplasm. The catalysed reaction is a ribonucleoside 5'-phosphate + H2O = a ribonucleoside + phosphate. In terms of biological role, nucleotidase that shows phosphatase activity on nucleoside 5'-monophosphates. This is 5'-nucleotidase SurE from Ruthia magnifica subsp. Calyptogena magnifica.